The following is a 190-amino-acid chain: Pyridoxal 5'-phosphate synthase subunit PdxT (190 aa).

46–48 provides a ligand contact to L-glutamine; the sequence is GES. The active-site Nucleophile is the Cys78. L-glutamine contacts are provided by residues Arg108 and 137–138; that span reads IR. Catalysis depends on charge relay system residues His174 and Glu176.

Belongs to the glutaminase PdxT/SNO family. As to quaternary structure, in the presence of PdxS, forms a dodecamer of heterodimers. Only shows activity in the heterodimer.

The enzyme catalyses aldehydo-D-ribose 5-phosphate + D-glyceraldehyde 3-phosphate + L-glutamine = pyridoxal 5'-phosphate + L-glutamate + phosphate + 3 H2O + H(+). It carries out the reaction L-glutamine + H2O = L-glutamate + NH4(+). Its pathway is cofactor biosynthesis; pyridoxal 5'-phosphate biosynthesis. Its function is as follows. Catalyzes the hydrolysis of glutamine to glutamate and ammonia as part of the biosynthesis of pyridoxal 5'-phosphate. The resulting ammonia molecule is channeled to the active site of PdxS. This Chloroflexus aggregans (strain MD-66 / DSM 9485) protein is Pyridoxal 5'-phosphate synthase subunit PdxT.